The following is a 535-amino-acid chain: Aklavinone 12-hydroxylase RdmE (535 aa).

FAD contacts are provided by Leu-15, Gly-16, Glu-35, Gln-119, and Leu-143. Tyr-224 acts as the Proton acceptor in catalysis. Asp-308 provides a ligand contact to FAD. An aklavinone-binding site is contributed by Gly-317.

Belongs to the PheA/TfdB FAD monooxygenase family. Monomer. FAD is required as a cofactor.

It catalyses the reaction aklavinone + NADPH + O2 + H(+) = epsilon-rhodomycinone + NADP(+) + H2O. The protein operates within antibiotic biosynthesis; daunorubicin biosynthesis. It participates in antibiotic biosynthesis; carminomycin biosynthesis. It functions in the pathway antibiotic biosynthesis; rhodomycin biosynthesis. With respect to regulation, inhibited by phenylglyoxal and 2,3-butanedione. NADP provides a partial protection against inhibition by phenylglyoxal. Increasing the methanol concentration in the assay causes inhibition of the enzyme. Functionally, involved in the biosynthesis of the anthracyclines carminomycin, rhodomycin and daunorubicin (daunomycin) which are aromatic polyketide antibiotics that exhibit high cytotoxicity and are widely applied in the chemotherapy of a variety of cancers. Catalyzes the incorporation of a hydroxyl group at position C-11 of aklavinone, resulting in epsilon-rhodomycinone. It cannot accept substrates glycosylated at position C-7 and is specific for the C-9R configuration of anthracyclines. It can use both NAD or NADP but it is slowly inactivated in the presence of NADH. The chain is Aklavinone 12-hydroxylase RdmE (rdmE) from Streptomyces purpurascens.